We begin with the raw amino-acid sequence, 150 residues long: Small ribosomal subunit protein uS11 (150 aa).

The protein belongs to the universal ribosomal protein uS11 family. Part of the 30S ribosomal subunit. Interacts with proteins S7 and S18. Binds to IF-3.

Its function is as follows. Located on the platform of the 30S subunit, it bridges several disparate RNA helices of the 16S rRNA. Forms part of the Shine-Dalgarno cleft in the 70S ribosome. This Pelagibacter ubique (strain HTCC1062) protein is Small ribosomal subunit protein uS11.